Reading from the N-terminus, the 295-residue chain is Indole-3-glycerol phosphate synthase (295 aa).

This sequence belongs to the TrpC family.

The catalysed reaction is 1-(2-carboxyphenylamino)-1-deoxy-D-ribulose 5-phosphate + H(+) = (1S,2R)-1-C-(indol-3-yl)glycerol 3-phosphate + CO2 + H2O. Its pathway is amino-acid biosynthesis; L-tryptophan biosynthesis; L-tryptophan from chorismate: step 4/5. The protein is Indole-3-glycerol phosphate synthase of Prochlorococcus marinus (strain MIT 9301).